A 169-amino-acid polypeptide reads, in one-letter code: Diuretic hormone 44 (169 aa).

A signal peptide spans 1–18; sequence MILLGILASTTIIGLTSS. Residues 19-96 constitute a propeptide that is removed on maturation; that stretch reads APLSSYERRD…ARRKQERDQR (78 aa). Positions 83-108 form a coiled coil; sequence MLELARRKQERDQRQIEENRRFLENI. Gln-97 carries the post-translational modification Pyrrolidone carboxylic acid. Isoleucine amide is present on Ile-108. Residues 109 to 169 constitute a propeptide that is removed on maturation; it reads GKRSVPVSDA…RVQANELRLL (61 aa).

Residues Ile-66 to Gly-109 may constitute another form of the DH44 peptide, which has not been detected yet. As to expression, expressed in brain, ventral ganglia and the retrocerebral complex (at protein level).

It localises to the secreted. Functionally, regulation of fluid secretion. This chain is Diuretic hormone 44, found in Camponotus floridanus (Florida carpenter ant).